The sequence spans 1434 residues: Protein patched homolog 1 (1434 aa).

Positions 1–13 (MASAGNAAGALGR) are enriched in low complexity. Residues 1–34 (MASAGNAAGALGRQAGGGRRRRTGGPHRAAPDRD) are disordered. The Cytoplasmic portion of the chain corresponds to 1-86 (MASAGNAAGA…GCYIQKNCGK (86 aa)). Residues 87-107 (FLVVGLLIFGAFAVGLKAANL) form a helical membrane-spanning segment. The Extracellular portion of the chain corresponds to 108 to 422 (ETNVEELWVE…LDDILKSFSD (315 aa)). 4 N-linked (GlcNAc...) asparagine glycosylation sites follow: Asn-127, Asn-298, Asn-335, and Asn-400. The chain crosses the membrane as a helical span at residues 423–443 (VSVIRVASGYLLMLAYACLTM). An SSD domain is found at 424–584 (SVIRVASGYL…LLIFPAILSM (161 aa)). The Cytoplasmic portion of the chain corresponds to 444–458 (LRWDCSKSQGAVGLA). Residues 459 to 479 (GVLLVALSVAAGLGLCSLIGI) traverse the membrane as a helical segment. Residues 480–487 (SFNAATTQ) lie on the Extracellular side of the membrane. The chain crosses the membrane as a helical span at residues 488 to 508 (VLPFLALGVGVDDVFLLAHAF). Residues 509–533 (SETGQNKRIPFEDRTGECLKRTGAS) are Cytoplasmic-facing. A helical membrane pass occupies residues 534 to 554 (VALTSISNVTAFFMAALIPIP). Residues 555–563 (ALRAFSLQA) are Extracellular-facing. The helical transmembrane segment at 564-584 (AVVVVFNFAMVLLIFPAILSM) threads the bilayer. Residues 585-734 (DLYRREDRRL…HYAPFLLKPK (150 aa)) are Cytoplasmic-facing. A helical transmembrane segment spans residues 735 to 755 (AKVVVILLFLGLLGVSLYGTT). The Extracellular portion of the chain corresponds to 756–1013 (RVRDGLDLTD…WEQYISLRHW (258 aa)). Residues Asn-861 and Asn-986 are each glycosylated (N-linked (GlcNAc...) asparagine). Residues 1014-1034 (LLLSISVVLACTFLVCAVFLL) form a helical membrane-spanning segment. Residues 1035–1039 (NPWTA) lie on the Cytoplasmic side of the membrane. Residues 1040–1060 (GIIVMVLALMTVELFGMMGLI) form a helical membrane-spanning segment. Over 1061–1069 (GIKLSAVPV) the chain is Extracellular. A helical transmembrane segment spans residues 1070 to 1090 (VILIASVGIGVEFTVHVALAF). At 1091-1107 (LTAIGDKNHRAMLALEH) the chain is on the cytoplasmic side. The chain crosses the membrane as a helical span at residues 1108–1128 (MFAPVLDGAVSTLLGVLMLAG). Topologically, residues 1129–1140 (SEFDFIVRYFFA) are extracellular. The chain crosses the membrane as a helical span at residues 1141 to 1161 (VLAILTVLGVLNGLVLLPVLL). Over 1162 to 1434 (SFFGPCPEVS…EERPWGSSSN (273 aa)) the chain is Cytoplasmic. Disordered regions lie at residues 1175 to 1219 (GLNR…TVSG), 1257 to 1348 (HPDS…SSVP), and 1368 to 1396 (HPPP…HGVF). Residue Thr-1181 is modified to Phosphothreonine. At Ser-1183 the chain carries Phosphoserine. The segment covering 1204 to 1213 (SDSSDSEYSS) has biased composition (low complexity). The span at 1288-1297 (PRRDPPREGL) shows a compositional bias: basic and acidic residues. Polar residues predominate over residues 1335–1348 (PRNPTSTAMGSSVP). Lys-1413 participates in a covalent cross-link: Glycyl lysine isopeptide (Lys-Gly) (interchain with G-Cter in ubiquitin).

The protein belongs to the patched family. In terms of assembly, interacts with SNX17. Interacts with IHH. Interacts with G-protein coupled receptor GPR37L1. Glycosylation is necessary for SHH binding. In terms of processing, in the absence of Hh ligands, ubiquitination by ITCH at Lys-1413 promotes endocytosis and both proteasomal and lysosomal degradation. As to expression, detected in cerebellar Bergmann glia cells (at protein level). In the developing embryo, first detected within the ventral neural tube and later in the somites and limb buds. Expression in the limb buds is restricted to the posterior ectoderm surrounding the zone of polarizing activity. In the adult, expression is seen in brain, lung, liver, kidney and ocular tissues; lower levels in heart, skeletal muscle, and testis.

The protein resides in the cell membrane. Acts as a receptor for sonic hedgehog (SHH), indian hedgehog (IHH) and desert hedgehog (DHH). Associates with the smoothened protein (SMO) to transduce the hedgehog's proteins signal. Seems to have a tumor suppressor function, as inactivation of this protein is probably a necessary, if not sufficient step for tumorigenesis. This chain is Protein patched homolog 1 (Ptch1), found in Mus musculus (Mouse).